The sequence spans 564 residues: 5-hydroxytryptamine receptor 1 (564 aa).

Residues 1–26 (MALSGQDWRRHQSHRQHRNHRTQGNH) form a disordered region. Residues 11 to 23 (HQSHRQHRNHRTQ) are compositionally biased toward basic residues. The helical transmembrane segment at 29-51 (LISTATLTLFVLFLSSWIAYAAG) threads the bilayer. 9 repeat units span residues 89 to 90 (GS), 91 to 92 (GS), 93 to 94 (GS), 95 to 96 (GS), 97 to 98 (GS), 99 to 100 (GS), 101 to 102 (GS), 103 to 104 (GS), and 105 to 106 (GS). A 9 X 2 AA tandem repeats of G-S region spans residues 89–106 (GSGSGSGSGSGSGSGSGS). The helical transmembrane segment at 165-188 (VSIVLLIVILGTVVGNVLVCIAVC) threads the bilayer. At 189–198 (MVRKLRRPCN) the chain is on the cytoplasmic side. Residues 199–222 (YLLVSLALSDLCVALLVMPMALLY) form a helical membrane-spanning segment. Topologically, residues 223–236 (EVLEKWNFGPLLCD) are extracellular. Cys-235 and Cys-314 are disulfide-bonded. Residues 237–258 (IWVSFDVLCCTASILNLCAISV) form a helical membrane-spanning segment. The agonist binding stretch occupies residues 238-247 (WVSFDVLCCT). Residues Asp-242 and Thr-247 each coordinate ergotamine. The DRY motif; important for ligand-induced conformation changes motif lies at 259 to 261 (DRY). At 259–278 (DRYLAITKPLEYGVKRTPRR) the chain is on the cytoplasmic side. A helical transmembrane segment spans residues 279 to 302 (MMLCVGIVWLAAACISLPPLLILG). The Extracellular segment spans residues 303-330 (NEHEDEEGQPICTVCQNFAYQIYATLGS). Residues 331–353 (FYIPLSVMLFVYYQIFRAARRIV) traverse the membrane as a helical segment. At 354-454 (LEEKRAQTHL…QLAKEKKAST (101 aa)) the chain is on the cytoplasmic side. A disordered region spans residues 367 to 396 (LNGTGSPSAPQAPPLGHTELASSGNGQRHS). Over residues 386–396 (LASSGNGQRHS) the composition is skewed to polar residues. Residues 455–476 (TLGIIMSAFTVCWLPFFILALI) form a helical membrane-spanning segment. Topologically, residues 477–487 (RPFETMHVPAS) are extracellular. Residues 488–510 (LSSLFLWLGYANSLLNPIIYATL) traverse the membrane as a helical segment. An NPxxY motif; important for ligand-induced conformation changes and signaling motif is present at residues 503–507 (NPIIY). Over 511-564 (NRDFRKPFQEILYFRCSSLNTMMRENYYQDQYGEPPSQRVMLGDERHGARESFL) the chain is Cytoplasmic.

This sequence belongs to the G-protein coupled receptor 1 family. 5-hydroxytryptamine receptor subfamily. Expressed predominantly in adult heads.

The protein resides in the cell membrane. Functionally, G-protein coupled receptor for 5-hydroxytryptamine (serotonin). Also functions as a receptor for various alkaloids. Ligand binding causes a conformation change that triggers signaling via guanine nucleotide-binding proteins (G proteins) and modulates the activity of down-stream effectors, such as adenylate cyclase. Signaling activates adenylate cyclase activity. This Drosophila melanogaster (Fruit fly) protein is 5-hydroxytryptamine receptor 1 (5-HT7).